Here is a 174-residue protein sequence, read N- to C-terminus: MNYFELFKFSPAFDIDTAVLAERYRELQRAVHPDKFANDTEQQRLLSVQRTAQVNDGYQTLKDPIRRAEHMLSLRGIDLSHETTTVKDTAFLMQQMEWREALEDIRDSADPQESIDELYDSFAAYRTKLTKLLTAQLSSGSEDDALLAADQVRKLKFMAKLHDELTRIEDALLD.

Positions 2–74 (NYFELFKFSP…IRRAEHMLSL (73 aa)) constitute a J domain.

Belongs to the HscB family. As to quaternary structure, interacts with HscA and stimulates its ATPase activity.

Functionally, co-chaperone involved in the maturation of iron-sulfur cluster-containing proteins. Seems to help targeting proteins to be folded toward HscA. The chain is Co-chaperone protein HscB homolog from Shewanella sp. (strain ANA-3).